The following is an 861-amino-acid chain: ATP-dependent helicase rhp16 (861 aa).

Over residues 1 to 13 (MGTSCNKINSNSN) the composition is skewed to polar residues. The segment at 1 to 217 (MGTSCNKINS…KSIPSHERTH (217 aa)) is disordered. Basic and acidic residues-rich tracts occupy residues 14–23 (KGKENMHFVL) and 38–57 (VERDDKLDMETTRWNGKEFE). Polar residues predominate over residues 60-82 (LSTNKKLIIQSNNTSSQHSTPPL). Positions 83 to 95 (SISDTSTHTGSST) are enriched in low complexity. Residues 96–106 (DNVEANPNTGF) show a composition bias toward polar residues. Positions 109–123 (ARKRSLRSSNLKKKF) are enriched in basic residues. The segment covering 131–145 (ESNESEFIDDDESDE) has biased composition (acidic residues). The segment covering 193–204 (ARASSSASSSSR) has biased composition (low complexity). In terms of domain architecture, Helicase ATP-binding spans 268–442 (RQEDSSFGGG…FSLLRFLRAD (175 aa)). 281–288 (DEMGMGKT) serves as a coordination point for ATP. Residues 393 to 396 (DEAH) carry the DEAH box motif. An RING-type zinc finger spans residues 609–652 (CKICDEVAQDAIESRCHHTFCRLCVTEYINAAGDGENVNCPSCF). Residues 695 to 848 (LVEELYLLRK…TIDQDEKALN (154 aa)) enclose the Helicase C-terminal domain.

This sequence belongs to the SNF2/RAD54 helicase family.

Its subcellular location is the nucleus. In terms of biological role, involved in global genome repair (GGR) via nucleotide excision repair (NER), in conjunction with rhp7, after UV irradiation. The sequence is that of ATP-dependent helicase rhp16 (rhp16) from Schizosaccharomyces pombe (strain 972 / ATCC 24843) (Fission yeast).